The primary structure comprises 858 residues: Phosphoenolpyruvate carboxylase (858 aa).

Catalysis depends on residues histidine 145 and lysine 531.

Belongs to the PEPCase type 1 family. Mg(2+) is required as a cofactor.

It carries out the reaction oxaloacetate + phosphate = phosphoenolpyruvate + hydrogencarbonate. Functionally, forms oxaloacetate, a four-carbon dicarboxylic acid source for the tricarboxylic acid cycle. This is Phosphoenolpyruvate carboxylase from Thermus thermophilus (strain ATCC BAA-163 / DSM 7039 / HB27).